We begin with the raw amino-acid sequence, 93 residues long: HIG1 domain family member 1A, mitochondrial (93 aa).

Ser2 carries the post-translational modification N-acetylserine. Residues Ser2–Pro93 form the HIG1 domain. At Ser8 the chain carries Phosphoserine. 2 helical membrane passes run Pro28 to Leu48 and Gly69 to Ala89. Topologically, residues Lys90–Pro93 are mitochondrial matrix.

Associates with cytochrome c oxidase (COX, complex IV); proposed complex component. Also associates with respiratory chain supercomplexes. Expressed in brain and spinal cord.

The protein localises to the mitochondrion membrane. Its subcellular location is the mitochondrion inner membrane. In terms of biological role, proposed subunit of cytochrome c oxidase (COX, complex IV), which is the terminal component of the mitochondrial respiratory chain that catalyzes the reduction of oxygen to water. May play a role in the assembly of respiratory supercomplexes. The protein is HIG1 domain family member 1A, mitochondrial (Higd1a) of Rattus norvegicus (Rat).